Here is a 153-residue protein sequence, read N- to C-terminus: Interleukin-2 (153 aa).

Positions 1–20 (MYKVQLLSCIALTLALLTSS) are cleaved as a signal peptide. The O-linked (GalNAc...) threonine glycan is linked to T23. Residues C78 and C125 are joined by a disulfide bond. N-linked (GlcNAc...) asparagine glycosylation occurs at N111.

Belongs to the IL-2 family.

The protein localises to the secreted. In terms of biological role, cytokine produced by activated CD4-positive helper T-cells and to a lesser extend activated CD8-positive T-cells and natural killer (NK) cells that plays pivotal roles in the immune response and tolerance. Binds to a receptor complex composed of either the high-affinity trimeric IL-2R (IL2RA/CD25, IL2RB/CD122 and IL2RG/CD132) or the low-affinity dimeric IL-2R (IL2RB and IL2RG). Interaction with the receptor leads to oligomerization and conformation changes in the IL-2R subunits resulting in downstream signaling starting with phosphorylation of JAK1 and JAK3. In turn, JAK1 and JAK3 phosphorylate the receptor to form a docking site leading to the phosphorylation of several substrates including STAT5. This process leads to activation of several pathways including STAT, phosphoinositide-3-kinase/PI3K and mitogen-activated protein kinase/MAPK pathways. Functions as a T-cell growth factor and can increase NK-cell cytolytic activity as well. Promotes strong proliferation of activated B-cells and subsequently immunoglobulin production. Plays a pivotal role in regulating the adaptive immune system by controlling the survival and proliferation of regulatory T-cells, which are required for the maintenance of immune tolerance. Moreover, participates in the differentiation and homeostasis of effector T-cell subsets, including Th1, Th2, Th17 as well as memory CD8-positive T-cells. This is Interleukin-2 (IL2) from Oryctolagus cuniculus (Rabbit).